A 412-amino-acid chain; its full sequence is Alanyl-tRNA editing protein Aarsd1-B (412 aa).

Zn(2+)-binding residues include His-108, His-112, Cys-208, and His-212.

Belongs to the class-II aminoacyl-tRNA synthetase family. Alax-L subfamily. Zn(2+) serves as cofactor.

Its subcellular location is the cytoplasm. Its function is as follows. Functions in trans to edit the amino acid moiety from incorrectly charged tRNA(Ala). The protein is Alanyl-tRNA editing protein Aarsd1-B (aarsd1-b) of Xenopus laevis (African clawed frog).